A 404-amino-acid chain; its full sequence is Cysteine desulfurase IscS (404 aa).

Residues 75–76 (AT), N155, Q183, and 203–205 (SAH) contribute to the pyridoxal 5'-phosphate site. K206 carries the post-translational modification N6-(pyridoxal phosphate)lysine. T243 is a binding site for pyridoxal 5'-phosphate. The active-site Cysteine persulfide intermediate is the C328. C328 contributes to the [2Fe-2S] cluster binding site.

It belongs to the class-V pyridoxal-phosphate-dependent aminotransferase family. NifS/IscS subfamily. Homodimer. Forms a heterotetramer with IscU, interacts with other sulfur acceptors. Pyridoxal 5'-phosphate serves as cofactor.

Its subcellular location is the cytoplasm. The catalysed reaction is (sulfur carrier)-H + L-cysteine = (sulfur carrier)-SH + L-alanine. The protein operates within cofactor biosynthesis; iron-sulfur cluster biosynthesis. Its function is as follows. Master enzyme that delivers sulfur to a number of partners involved in Fe-S cluster assembly, tRNA modification or cofactor biosynthesis. Catalyzes the removal of elemental sulfur atoms from cysteine to produce alanine. Functions as a sulfur delivery protein for Fe-S cluster synthesis onto IscU, an Fe-S scaffold assembly protein, as well as other S acceptor proteins. The chain is Cysteine desulfurase IscS from Colwellia psychrerythraea (strain 34H / ATCC BAA-681) (Vibrio psychroerythus).